The sequence spans 311 residues: Lipoyl synthase (311 aa).

[4Fe-4S] cluster-binding residues include cysteine 47, cysteine 52, cysteine 58, cysteine 73, cysteine 77, cysteine 80, and serine 286. One can recognise a Radical SAM core domain in the interval 59-276 (WSRHTATYLA…RSVGESLGLF (218 aa)).

Belongs to the radical SAM superfamily. Lipoyl synthase family. Requires [4Fe-4S] cluster as cofactor.

It is found in the cytoplasm. It carries out the reaction [[Fe-S] cluster scaffold protein carrying a second [4Fe-4S](2+) cluster] + N(6)-octanoyl-L-lysyl-[protein] + 2 oxidized [2Fe-2S]-[ferredoxin] + 2 S-adenosyl-L-methionine + 4 H(+) = [[Fe-S] cluster scaffold protein] + N(6)-[(R)-dihydrolipoyl]-L-lysyl-[protein] + 4 Fe(3+) + 2 hydrogen sulfide + 2 5'-deoxyadenosine + 2 L-methionine + 2 reduced [2Fe-2S]-[ferredoxin]. Its pathway is protein modification; protein lipoylation via endogenous pathway; protein N(6)-(lipoyl)lysine from octanoyl-[acyl-carrier-protein]: step 2/2. Functionally, catalyzes the radical-mediated insertion of two sulfur atoms into the C-6 and C-8 positions of the octanoyl moiety bound to the lipoyl domains of lipoate-dependent enzymes, thereby converting the octanoylated domains into lipoylated derivatives. The chain is Lipoyl synthase from Chlamydia trachomatis serovar A (strain ATCC VR-571B / DSM 19440 / HAR-13).